The chain runs to 276 residues: Transmembrane protein 81 (276 aa).

Residues 1 to 24 (MKTSATSFIPGSLVLAFCLPVVAT) form the signal peptide. The Extracellular segment spans residues 25–225 (SPKTLAIPEK…QHPPWKKKVA (201 aa)). An N-linked (GlcNAc...) asparagine glycan is attached at Asn45. In terms of domain architecture, Ig-like spans 83–176 (TNWLCGMLHF…NLRLVKRLYF (94 aa)). Cys104 and Cys160 are joined by a disulfide. N-linked (GlcNAc...) asparagine glycosylation is present at Asn211. A helical membrane pass occupies residues 226–246 (IAVGIGVAGGVTGGVLVSIVL). Over 247 to 276 (CGRLSVIHSSASLETLQALLPKGGMLRKPD) the chain is Cytoplasmic.

In terms of assembly, forms a complex with IZUMO1 and SPACA6 on spermatocyte cell membrane required for fertilization.

It is found in the cell membrane. Functionally, essential fertilization factor required for male fertility. Part of a conserved trimeric sperm complex with the essential fertilization factors IZUMO1 and SPACA6 which bridges sperm and oocyte membranes during fertilization by binding to IZUMO1R/JUNO on the oocyte. In Bos taurus (Bovine), this protein is Transmembrane protein 81 (TMEM81).